The sequence spans 463 residues: Argininosuccinate lyase (463 aa).

This sequence belongs to the lyase 1 family. Argininosuccinate lyase subfamily.

It localises to the cytoplasm. It carries out the reaction 2-(N(omega)-L-arginino)succinate = fumarate + L-arginine. The protein operates within amino-acid biosynthesis; L-arginine biosynthesis; L-arginine from L-ornithine and carbamoyl phosphate: step 3/3. The chain is Argininosuccinate lyase from Streptococcus pneumoniae (strain 70585).